The following is a 209-amino-acid chain: Ribosomal RNA small subunit methyltransferase G (209 aa).

Residues G72, L77, 123-124, and R138 contribute to the S-adenosyl-L-methionine site; that span reads AE.

This sequence belongs to the methyltransferase superfamily. RNA methyltransferase RsmG family.

The protein localises to the cytoplasm. In terms of biological role, specifically methylates the N7 position of guanine in position 518 of 16S rRNA. The polypeptide is Ribosomal RNA small subunit methyltransferase G (Leifsonia xyli subsp. xyli (strain CTCB07)).